Here is a 133-residue protein sequence, read N- to C-terminus: uncharacterized protein (133 aa).

A helical membrane pass occupies residues L36–M56. Residues H105–M133 are disordered. The span at E119 to M133 shows a compositional bias: basic and acidic residues.

Its subcellular location is the membrane. This is an uncharacterized protein from Homo sapiens (Human).